A 161-amino-acid polypeptide reads, in one-letter code: Phosphopantetheine adenylyltransferase (161 aa).

T10 provides a ligand contact to substrate. Residues 10–11 (TF) and H18 each bind ATP. Substrate-binding residues include K42, L74, and R88. ATP is bound by residues 89-91 (GIR), E99, and 124-130 (WRYLSST).

This sequence belongs to the bacterial CoaD family. In terms of assembly, homohexamer. It depends on Mg(2+) as a cofactor.

The protein localises to the cytoplasm. The enzyme catalyses (R)-4'-phosphopantetheine + ATP + H(+) = 3'-dephospho-CoA + diphosphate. It functions in the pathway cofactor biosynthesis; coenzyme A biosynthesis; CoA from (R)-pantothenate: step 4/5. Its function is as follows. Reversibly transfers an adenylyl group from ATP to 4'-phosphopantetheine, yielding dephospho-CoA (dPCoA) and pyrophosphate. This Haemophilus ducreyi (strain 35000HP / ATCC 700724) protein is Phosphopantetheine adenylyltransferase.